The primary structure comprises 392 residues: Anhydro-N-acetylmuramic acid kinase (392 aa).

22-29 (GTSMDGVD) lines the ATP pocket.

It belongs to the anhydro-N-acetylmuramic acid kinase family.

It catalyses the reaction 1,6-anhydro-N-acetyl-beta-muramate + ATP + H2O = N-acetyl-D-muramate 6-phosphate + ADP + H(+). The protein operates within amino-sugar metabolism; 1,6-anhydro-N-acetylmuramate degradation. It participates in cell wall biogenesis; peptidoglycan recycling. Catalyzes the specific phosphorylation of 1,6-anhydro-N-acetylmuramic acid (anhMurNAc) with the simultaneous cleavage of the 1,6-anhydro ring, generating MurNAc-6-P. Is required for the utilization of anhMurNAc either imported from the medium or derived from its own cell wall murein, and thus plays a role in cell wall recycling. This is Anhydro-N-acetylmuramic acid kinase from Burkholderia pseudomallei (strain 1106a).